The primary structure comprises 509 residues: Galactose-1-phosphate uridylyltransferase (509 aa).

It belongs to the galactose-1-phosphate uridylyltransferase type 2 family.

It localises to the cytoplasm. The catalysed reaction is alpha-D-galactose 1-phosphate + UDP-alpha-D-glucose = alpha-D-glucose 1-phosphate + UDP-alpha-D-galactose. Its pathway is carbohydrate metabolism; galactose metabolism. The sequence is that of Galactose-1-phosphate uridylyltransferase from Fusobacterium nucleatum subsp. nucleatum (strain ATCC 25586 / DSM 15643 / BCRC 10681 / CIP 101130 / JCM 8532 / KCTC 2640 / LMG 13131 / VPI 4355).